We begin with the raw amino-acid sequence, 223 residues long: ATP phosphoribosyltransferase (223 aa).

It belongs to the ATP phosphoribosyltransferase family. Short subfamily. In terms of assembly, heteromultimer composed of HisG and HisZ subunits.

The protein resides in the cytoplasm. The enzyme catalyses 1-(5-phospho-beta-D-ribosyl)-ATP + diphosphate = 5-phospho-alpha-D-ribose 1-diphosphate + ATP. It functions in the pathway amino-acid biosynthesis; L-histidine biosynthesis; L-histidine from 5-phospho-alpha-D-ribose 1-diphosphate: step 1/9. Its function is as follows. Catalyzes the condensation of ATP and 5-phosphoribose 1-diphosphate to form N'-(5'-phosphoribosyl)-ATP (PR-ATP). Has a crucial role in the pathway because the rate of histidine biosynthesis seems to be controlled primarily by regulation of HisG enzymatic activity. This Sphingopyxis alaskensis (strain DSM 13593 / LMG 18877 / RB2256) (Sphingomonas alaskensis) protein is ATP phosphoribosyltransferase.